A 769-amino-acid chain; its full sequence is MDREEPAESECTLRALVEEYNGACKEAPKEMSKQFTDYNTFKRYTTSKKDHAPQMRLVYSVRKPWPISMTPSKEIPLVFNGTKLKDTILDLGESKRTRANIVVPDYWSKYGSQTSLEVVNAILYAEDLKVQRFFSTEWGEIRYGRMLPFRKPVQACPTIEEVNPASIPHTLLQVFCPQYTTLDSKRKAHMGAVEKLKRVMEPICKVQTQESAVHIARSLIDSNKKWLPTVVDHTPRTAEMAHFLCSKYHYVHTNTQDLSDTRSIDNLCGELVKRSLKCRCPKETLVANLDKITIQGRPMREVLADHDGELPYLGICRVAMGLSTHHTMKIRSTKFSILNSDHPRIEVKKVFSLSPDVQVTIPYRRFKGKAKVYFQNDQIQGYFSCTDRQIDEIKISAPKNAPLLEPLLDICYYGSFIEPGFEQTFGFYPAGKREFVDSFFMHHSKDHKAFLIHMGLDKDLSLPLSPELNWKEPALSKVCRVTELDSTVQPYTSATREFVLGETLNVYTQHENGLELLICPTEIRSTRGPLPPGTNLSGSEFIDIYQDPFSRAKSLLKSTILHAERCKEFVGNMLEEYQDPAETTVQSLVPINTWGKSAKRKLQEEITSDPDWHQCPRKRAKMSYLAIIAGSIQDRDKKQTNVPRAFMLRGSQIEYDMKATRGLVVDTTNRIIVGGETVLREGKGGPEGYVQTGVFEEQPRCYLVDTPDHGLSMGLSRFCVHSQGRYFQYEKKISIWEETDNIKATIDSQRDLKRRRDIEEMVSKRARIV.

The Nuclear localization signal signature appears at 753–756 (KRRR).

This sequence belongs to the influenza viruses PB2 family. As to quaternary structure, RNA polymerase is composed of three subunits: PA, PB1 and PB2.

Its subcellular location is the virion. It localises to the host nucleus. Functionally, subunit of the RNA-dependent RNA polymerase which is responsible for replication and transcription of virus RNA segments. The transcription of viral mRNAs occurs by a unique mechanism called cap-snatching. 5' methylated caps of cellular mRNAs are cleaved after 10-13 nucleotides by PA. In turn, these short capped RNAs are used as primers by PB1 for transcription of viral mRNAs. During virus replication, PB1 initiates RNA synthesis and copy vRNA into complementary RNA (cRNA) which in turn serves as a template for the production of more vRNAs. In Amblyomma variegatum (Tropical bont tick), this protein is Polymerase basic protein 2.